Reading from the N-terminus, the 29-residue chain is uncharacterized protein (29 aa).

It localises to the plastid. Its subcellular location is the chloroplast. This is an uncharacterized protein from Trieres chinensis (Marine centric diatom).